The sequence spans 1099 residues: Non-structural polyprotein 1A (1099 aa).

6 helical membrane passes run 195–215, 329–348, 353–373, 397–417, 426–446, and 450–470; these read AFSF…LHYT, ISYY…ALAT, MVMV…PITV, FLPY…FFSS, VSTA…VIVL, and SIPM…SVGV. Catalysis depends on charge relay system; for serine protease activity residues His550, Asp582, and Ser647. Tyr833 carries the post-translational modification O-(5'-phospho-RNA)-tyrosine.

Belongs to the astroviridae polyprotein 1A family. As to quaternary structure, monomer. Cleaved by the viral and host proteases. The protease is probably autocatalytically cleaved.

Its subcellular location is the host membrane. It carries out the reaction RNA(n) + a ribonucleoside 5'-triphosphate = RNA(n+1) + diphosphate. Its function is as follows. Responsible for the cleavage of the polyprotein into functional products. Protein covalently attached to the 5' extremity of the genomic and subgenomic RNAs. It may serve as a primer for the replicase. This is Non-structural polyprotein 1A (ORF1) from Turkey astrovirus 1 (TAstV-1).